A 341-amino-acid polypeptide reads, in one-letter code: Glyceraldehyde-3-phosphate dehydrogenase 3 (341 aa).

NAD(+)-binding positions include 13–14 (RI), Asp35, and Arg85. Residues 157–159 (SCT), Thr188, 217–218 (TG), and Arg240 contribute to the D-glyceraldehyde 3-phosphate site. The Nucleophile role is filled by Cys158. Asn322 is an NAD(+) binding site.

The protein belongs to the glyceraldehyde-3-phosphate dehydrogenase family. As to quaternary structure, homotetramer.

The protein resides in the cytoplasm. It catalyses the reaction D-glyceraldehyde 3-phosphate + phosphate + NAD(+) = (2R)-3-phospho-glyceroyl phosphate + NADH + H(+). Its pathway is carbohydrate degradation; glycolysis; pyruvate from D-glyceraldehyde 3-phosphate: step 1/5. The sequence is that of Glyceraldehyde-3-phosphate dehydrogenase 3 (gpd-3) from Caenorhabditis elegans.